Here is a 272-residue protein sequence, read N- to C-terminus: MSIYTNSKPWTVPALAEAKRNGSKIVMLTAYDAGFARILDANGVDLVLVGDSLGMVVQGHDSTLPVSVHDMVYHTACVARGVRQAMLVVDLPFQADASPERALEAATPLLRVGAQMIKIEGAGHKLEVISYLVEREIPVCSHLGLTPQSVLRFGGYKVQGRGEEAGGRLRAEARAAVEAGATLLLLECVPSQLAAQITTDVSVPTIGIGAGAGCDGQVLVLHDLLGLDSGHPRPKFVKDFLAHGGSVAGAVRAYANAVRDGSFPDVEHTYTS.

The Mg(2+) site is built by Asp-51 and Asp-90. Residues 51–52 (DS), Asp-90, and Lys-118 each bind 3-methyl-2-oxobutanoate. Mg(2+) is bound at residue Glu-120. The active-site Proton acceptor is Glu-187.

This sequence belongs to the PanB family. As to quaternary structure, homodecamer; pentamer of dimers. Mg(2+) serves as cofactor.

The protein localises to the cytoplasm. It carries out the reaction 3-methyl-2-oxobutanoate + (6R)-5,10-methylene-5,6,7,8-tetrahydrofolate + H2O = 2-dehydropantoate + (6S)-5,6,7,8-tetrahydrofolate. It participates in cofactor biosynthesis; (R)-pantothenate biosynthesis; (R)-pantoate from 3-methyl-2-oxobutanoate: step 1/2. Catalyzes the reversible reaction in which hydroxymethyl group from 5,10-methylenetetrahydrofolate is transferred onto alpha-ketoisovalerate to form ketopantoate. This is 3-methyl-2-oxobutanoate hydroxymethyltransferase from Xylella fastidiosa (strain 9a5c).